Here is a 102-residue protein sequence, read N- to C-terminus: MSEKSVEAAAELSAKDLKEKKEKVEEKASRKERKKEVVEEEENGAEEEEEETAEDGEEEDEGEEEDEEEEEEDDEGPALKRAAEEEDEADPKRQKTENGASA.

The interval 1 to 102 is disordered; that stretch reads MSEKSVEAAA…RQKTENGASA (102 aa). Ser-2 is modified (N-acetylserine). Phosphoserine is present on Ser-2. N6-acetyllysine is present on Lys-4. Phosphoserine is present on residues Ser-5 and Ser-13. A compositionally biased stretch (basic and acidic residues) spans 13-37; sequence SAKDLKEKKEKVEEKASRKERKKEV. N6-acetyllysine is present on Lys-15. Residues 38–76 show a composition bias toward acidic residues; that stretch reads VEEEENGAEEEEEETAEDGEEEDEGEEEDEEEEEEDDEG. At Thr-52 the chain carries Phosphothreonine. At Lys-92 the chain carries N6-acetyllysine.

Belongs to the pro/parathymosin family.

Its function is as follows. Parathymosin may mediate immune function by blocking the effect of prothymosin alpha which confers resistance to certain opportunistic infections. This is Parathymosin (PTMS) from Homo sapiens (Human).